The sequence spans 117 residues: Large ribosomal subunit protein uL18 (117 aa).

It belongs to the universal ribosomal protein uL18 family. Part of the 50S ribosomal subunit; part of the 5S rRNA/L5/L18/L25 subcomplex. Contacts the 5S and 23S rRNAs.

Its function is as follows. This is one of the proteins that bind and probably mediate the attachment of the 5S RNA into the large ribosomal subunit, where it forms part of the central protuberance. This chain is Large ribosomal subunit protein uL18, found in Pasteurella multocida (strain Pm70).